The following is a 179-amino-acid chain: Isopentenyl-diphosphate Delta-isomerase (179 aa).

Mn(2+) contacts are provided by histidine 24 and histidine 30. The region spanning 28–160 is the Nudix hydrolase domain; that stretch reads LLHRAFSIFI…PEKFTVWFLT (133 aa). Cysteine 65 is an active-site residue. Histidine 67 provides a ligand contact to Mn(2+). Glutamate 85 contacts Mg(2+). Residues glutamate 110 and glutamate 112 each coordinate Mn(2+). The active site involves glutamate 112.

This sequence belongs to the IPP isomerase type 1 family. In terms of assembly, homodimer. Mg(2+) is required as a cofactor. The cofactor is Mn(2+).

It localises to the cytoplasm. The enzyme catalyses isopentenyl diphosphate = dimethylallyl diphosphate. The protein operates within isoprenoid biosynthesis; dimethylallyl diphosphate biosynthesis; dimethylallyl diphosphate from isopentenyl diphosphate: step 1/1. In terms of biological role, catalyzes the 1,3-allylic rearrangement of the homoallylic substrate isopentenyl (IPP) to its highly electrophilic allylic isomer, dimethylallyl diphosphate (DMAPP). The sequence is that of Isopentenyl-diphosphate Delta-isomerase from Serratia proteamaculans (strain 568).